The following is a 161-amino-acid chain: Allophycocyanin alpha chain (161 aa).

Asn71 carries the post-translational modification N4-methylasparagine. Cys81 is a (2R,3E)-phycocyanobilin binding site.

Belongs to the phycobiliprotein family. In terms of assembly, heterodimer of an alpha and a beta chain. In terms of processing, contains one covalently linked phycocyanobilin chromophore.

It is found in the cellular thylakoid membrane. Its function is as follows. Light-harvesting photosynthetic bile pigment-protein from the phycobiliprotein complex. Allophycocyanin has a maximum absorption at approximately 650 nanometers. The polypeptide is Allophycocyanin alpha chain (apcA) (Thermosynechococcus vestitus (strain NIES-2133 / IAM M-273 / BP-1)).